The primary structure comprises 289 residues: ATP synthase gamma chain (289 aa).

The protein belongs to the ATPase gamma chain family. F-type ATPases have 2 components, CF(1) - the catalytic core - and CF(0) - the membrane proton channel. CF(1) has five subunits: alpha(3), beta(3), gamma(1), delta(1), epsilon(1). CF(0) has three main subunits: a, b and c.

The protein resides in the cell membrane. In terms of biological role, produces ATP from ADP in the presence of a proton gradient across the membrane. The gamma chain is believed to be important in regulating ATPase activity and the flow of protons through the CF(0) complex. This Alkaliphilus metalliredigens (strain QYMF) protein is ATP synthase gamma chain.